The following is a 254-amino-acid chain: uncharacterized protein (254 aa).

The 234-residue stretch at 6–239 (LSVDGVEFAY…NIKAVYGVDA (234 aa)) folds into the ABC transporter domain. ATP is bound at residue 38–45 (GVNGAGKS).

This sequence belongs to the ABC transporter superfamily.

This is an uncharacterized protein from Methanocaldococcus jannaschii (strain ATCC 43067 / DSM 2661 / JAL-1 / JCM 10045 / NBRC 100440) (Methanococcus jannaschii).